We begin with the raw amino-acid sequence, 448 residues long: D-inositol 3-phosphate glycosyltransferase (448 aa).

1D-myo-inositol 3-phosphate contacts are provided by residues H35, 46–51 (DAGGLN), K104, Y137, T161, and R181. G49 is a UDP-N-acetyl-alpha-D-glucosamine binding site. Residues R255, K260, and M321 each contribute to the UDP-N-acetyl-alpha-D-glucosamine site. Positions 330, 331, and 333 each coordinate Mg(2+). Positions 343 and 351 each coordinate UDP-N-acetyl-alpha-D-glucosamine. T357 contacts Mg(2+).

The protein belongs to the glycosyltransferase group 1 family. MshA subfamily. In terms of assembly, homodimer.

The catalysed reaction is 1D-myo-inositol 3-phosphate + UDP-N-acetyl-alpha-D-glucosamine = 1D-myo-inositol 2-acetamido-2-deoxy-alpha-D-glucopyranoside 3-phosphate + UDP + H(+). Catalyzes the transfer of a N-acetyl-glucosamine moiety to 1D-myo-inositol 3-phosphate to produce 1D-myo-inositol 2-acetamido-2-deoxy-glucopyranoside 3-phosphate in the mycothiol biosynthesis pathway. The chain is D-inositol 3-phosphate glycosyltransferase from Acidothermus cellulolyticus (strain ATCC 43068 / DSM 8971 / 11B).